Consider the following 1058-residue polypeptide: Structural maintenance of chromosomes protein 6A (1058 aa).

Residues 23 to 1049 form the Zinc-hook domain; the sequence is ILRIRLENFM…SMVKSHEKIK (1027 aa). 50 to 57 is an ATP binding site; it reads GQNGSGKS. Residues 136–449 are a coiled coil; sequence KISSRKEELR…NDLKKHQTNK (314 aa). The flexible hinge stretch occupies residues 450-633; sequence VTAFGGDKVI…PPRPRRPTRL (184 aa). Residues 634–927 adopt a coiled-coil conformation; the sequence is CASFDDQIKD…RNKDLLKREL (294 aa).

This sequence belongs to the SMC family. SMC6 subfamily. Forms a heterodimer with SMC5. The SMC5-SMC6 complex is composed of the SMC5 and SMC6 heterodimer attached via their hinge domain and from the non-SMC subunit NSE4A or NSE4B. As to expression, expressed in seedlings, rosette leaves and floral buds.

It is found in the nucleus. Its subcellular location is the chromosome. In terms of biological role, core component of the SMC5-SMC6 complex that promotes sister chromatid alignment after DNA damage and facilitates double-stranded DNA breaks (DSBs) repair via homologous recombination between sister chromatids. The protein is Structural maintenance of chromosomes protein 6A (SMC6A) of Arabidopsis thaliana (Mouse-ear cress).